The following is an 84-amino-acid chain: Small ribosomal subunit protein bS16 (84 aa).

It belongs to the bacterial ribosomal protein bS16 family.

The protein is Small ribosomal subunit protein bS16 of Methylococcus capsulatus (strain ATCC 33009 / NCIMB 11132 / Bath).